The primary structure comprises 371 residues: Maltose/maltodextrin import ATP-binding protein MalK (371 aa).

The ABC transporter domain maps to 4 to 234; it reads VQLQNVTKAW…PADRFVAGFI (231 aa). 36–43 provides a ligand contact to ATP; that stretch reads GPSGCGKS.

The protein belongs to the ABC transporter superfamily. Maltooligosaccharide importer (TC 3.A.1.1.1) family. In terms of assembly, the complex is composed of two ATP-binding proteins (MalK), two transmembrane proteins (MalG and MalK) and a solute-binding protein (MalE).

It is found in the cell inner membrane. It carries out the reaction D-maltose(out) + ATP + H2O = D-maltose(in) + ADP + phosphate + H(+). In terms of biological role, part of the ABC transporter complex MalEFGK involved in maltose/maltodextrin import. Responsible for energy coupling to the transport system. This chain is Maltose/maltodextrin import ATP-binding protein MalK, found in Shigella flexneri serotype 5b (strain 8401).